A 388-amino-acid polypeptide reads, in one-letter code: Na(+)/H(+) antiporter NhaA (388 aa).

Over Met-1–Asp-11 the chain is Cytoplasmic. Residues Ala-12 to Ser-31 form a helical membrane-spanning segment. Topologically, residues Gly-32–Asn-58 are periplasmic. A helical membrane pass occupies residues Met-59–Lys-80. The Cytoplasmic portion of the chain corresponds to Arg-81–Phe-96. The helical transmembrane segment at Pro-97 to Asn-116 threads the bilayer. Topologically, residues Tyr-117–Thr-122 are periplasmic. Residues Arg-123–Ala-130 traverse the membrane as a helical segment. At Ala-131 to Ile-154 the chain is on the cytoplasmic side. The chain crosses the membrane as a helical span at residues Phe-155–Thr-176. At Asn-177–Ser-180 the chain is on the periplasmic side. Residues Met-181–Cys-200 traverse the membrane as a helical segment. The Cytoplasmic portion of the chain corresponds to Gly-201 to Arg-204. Residues Thr-205 to Ser-222 traverse the membrane as a helical segment. Residue Gly-223 is a topological domain, periplasmic. A helical membrane pass occupies residues Val-224–Phe-236. At Ile-237–His-253 the chain is on the cytoplasmic side. The chain crosses the membrane as a helical span at residues Val-254–Ala-272. Residues Gly-273–Ser-286 are Periplasmic-facing. Residues Ile-287–Leu-310 traverse the membrane as a helical segment. The Cytoplasmic segment spans residues Ala-311–Phe-339. Residues Thr-340–Phe-350 form a helical membrane-spanning segment. The Periplasmic portion of the chain corresponds to Gly-351–Leu-357. The helical transmembrane segment at Ile-358 to Leu-380 threads the bilayer. Over Arg-381–Val-388 the chain is Cytoplasmic.

It belongs to the NhaA Na(+)/H(+) (TC 2.A.33) antiporter family.

Its subcellular location is the cell inner membrane. The enzyme catalyses Na(+)(in) + 2 H(+)(out) = Na(+)(out) + 2 H(+)(in). Functionally, na(+)/H(+) antiporter that extrudes sodium in exchange for external protons. This is Na(+)/H(+) antiporter NhaA from Shigella flexneri.